Reading from the N-terminus, the 270-residue chain is Glucosamine-6-phosphate deaminase (270 aa).

D72 functions as the Proton acceptor; for enolization step in the catalytic mechanism. The For ring-opening step role is filled by D141. H143 acts as the Proton acceptor; for ring-opening step in catalysis. The active-site For ring-opening step is E148.

It belongs to the glucosamine/galactosamine-6-phosphate isomerase family. NagB subfamily.

It carries out the reaction alpha-D-glucosamine 6-phosphate + H2O = beta-D-fructose 6-phosphate + NH4(+). It functions in the pathway amino-sugar metabolism; N-acetylneuraminate degradation; D-fructose 6-phosphate from N-acetylneuraminate: step 5/5. With respect to regulation, allosterically activated by N-acetylglucosamine 6-phosphate (GlcNAc6P). Catalyzes the reversible isomerization-deamination of glucosamine 6-phosphate (GlcN6P) to form fructose 6-phosphate (Fru6P) and ammonium ion. The polypeptide is Glucosamine-6-phosphate deaminase (Parabacteroides distasonis (strain ATCC 8503 / DSM 20701 / CIP 104284 / JCM 5825 / NCTC 11152)).